A 366-amino-acid polypeptide reads, in one-letter code: MEGQRVEVDGGIMEGGGQILRVSTALSCLLGLPLRVQKIRAGRSTPGLRPQHLSGLEMVRDLCGGHLEGAEIGSTEITFTPEKIRGGVHTADTKTAGSVCLLMQVSMPCVLFAASPSELRLKGGTNAEMAPQIDYTMMVFKPIAEKFGFTFNCDIKTRGYYPKGGGEVIVRVSPVKRLDPINLTDRGSVTKIYGRAFVAGVLPLKVAKDMAAAAVRCIRKEIRDLYVSIQPVQEARDQAFGNGSGIIIVAETSTGCLFAGSSLGKRGVNADKVGIEAAEMLLANLRHGGTVDEYLQDQLIIFMALANGISRIKTGSVTLHTQTAIHFAEQLAKAKFTVKKSEEEEDATKDTYVIECEGIGMANPHL.

The ATP site is built by Q104, P131, Y294, D297, Q298, and H320. H320 functions as the Tele-AMP-histidine intermediate in the catalytic mechanism.

It belongs to the RNA 3'-terminal cyclase family. Type 1 subfamily. Detected in retinal ganglion cells (RGCs) (at protein level).

The protein resides in the nucleus. The protein localises to the nucleoplasm. The catalysed reaction is a 3'-end 3'-phospho-ribonucleotide-RNA + ATP = a 3'-end 2',3'-cyclophospho-ribonucleotide-RNA + AMP + diphosphate. Functionally, catalyzes the conversion of 3'-phosphate to a 2',3'-cyclic phosphodiester at the end of RNA. The mechanism of action of the enzyme occurs in 3 steps: (A) adenylation of the enzyme by ATP; (B) transfer of adenylate to an RNA-N3'P to produce RNA-N3'PP5'A; (C) and attack of the adjacent 2'-hydroxyl on the 3'-phosphorus in the diester linkage to produce the cyclic end product. Likely functions in some aspects of cellular RNA processing. Function plays an important role in regulating axon regeneration by inhibiting central nervous system (CNS) axon regeneration following optic nerve injury. The chain is RNA 3'-terminal phosphate cyclase from Mus musculus (Mouse).